We begin with the raw amino-acid sequence, 579 residues long: Probable cytochrome c oxidase subunit 1-alpha (579 aa).

The disordered stretch occupies residues 1-21; sequence MSILNEPQGAAAAEDSYENEL. Residues 44–64 traverse the membrane as a helical segment; sequence IGTLYLVTSFAFFCIGGVMAL. His90 provides a ligand contact to Fe(II)-heme a. A run of 6 helical transmembrane segments spans residues 93–113, 125–145, 174–194, 217–237, 262–282, and 295–315; these read IMLL…IMPL, LNMF…GGFL, MWIM…VNFI, VLLT…ALFA, LFWF…FGII, and FGYM…VTVW. The Cu cation site is built by His268 and Tyr272. A cross-link (1'-histidyl-3'-tyrosine (His-Tyr)) is located at residues 268–272; sequence HPEVY. The Cu cation site is built by His317 and His318. 5 helical membrane passes run 319-339, 363-383, 397-417, 437-457, and 480-500; these read MYVT…LIAV, MLWA…GVIL, FVVA…MFSG, ITFW…HWLG, and ISTI…YNVW. His401 is a binding site for heme a3. His403 provides a ligand contact to Fe(II)-heme a.

It belongs to the heme-copper respiratory oxidase family. As to quaternary structure, associates with subunits II, III and IV to form cytochrome c oxidase. Cu(2+) is required as a cofactor. The cofactor is heme.

It is found in the cell membrane. It carries out the reaction 4 Fe(II)-[cytochrome c] + O2 + 8 H(+)(in) = 4 Fe(III)-[cytochrome c] + 2 H2O + 4 H(+)(out). It participates in energy metabolism; oxidative phosphorylation. Cytochrome c oxidase is the component of the respiratory chain that catalyzes the reduction of oxygen to water. Subunits 1-3 form the functional core of the enzyme complex. CO I is the catalytic subunit of the enzyme. Electrons originating in cytochrome c are transferred via the copper A center of subunit 2 and heme A of subunit 1 to the bimetallic center formed by heme A3 and copper B. The protein is Probable cytochrome c oxidase subunit 1-alpha (ctaD1) of Streptomyces avermitilis (strain ATCC 31267 / DSM 46492 / JCM 5070 / NBRC 14893 / NCIMB 12804 / NRRL 8165 / MA-4680).